A 226-amino-acid chain; its full sequence is Probable thiol methyltransferase 2 (226 aa).

S-adenosyl-L-methionine-binding residues include tryptophan 29, tryptophan 33, tryptophan 40, and glycine 67. Residue serine 79 is modified to Phosphoserine. Residues aspartate 88, 116-117 (DF), and tyrosine 132 each bind S-adenosyl-L-methionine.

It belongs to the class I-like SAM-binding methyltransferase superfamily. TPMT family.

It carries out the reaction a thiol + S-adenosyl-L-methionine = a methyl thioether + S-adenosyl-L-homocysteine + H(+). Functionally, S-adenosyl-L-methionine-dependent methyltransferase. This Arabidopsis thaliana (Mouse-ear cress) protein is Probable thiol methyltransferase 2 (HOL3).